Reading from the N-terminus, the 163-residue chain is Epithelial membrane protein 3 (163 aa).

The chain crosses the membrane as a helical span at residues 4 to 24 (LLLVVSALHILILVLLFVATL). N-linked (GlcNAc...) asparagine glycosylation is found at N46 and N56. 3 helical membrane passes run 66 to 86 (VQAL…LFMF), 100 to 120 (TGLC…IYAI), and 139 to 159 (FALA…YIHL).

It belongs to the PMP-22/EMP/MP20 family.

The protein resides in the membrane. Its function is as follows. Probably involved in cell proliferation and cell-cell interactions. This Mus musculus (Mouse) protein is Epithelial membrane protein 3 (Emp3).